We begin with the raw amino-acid sequence, 1399 residues long: DNA-directed RNA polymerase subunit beta' (1399 aa).

Cys71, Cys73, Cys86, and Cys89 together coordinate Zn(2+). Residues Asp462, Asp464, and Asp466 each contribute to the Mg(2+) site. 4 residues coordinate Zn(2+): Cys810, Cys884, Cys891, and Cys894. The interval 1379–1399 (KQAAIVPSQPEPQPLALPPAE) is disordered. The segment covering 1387 to 1399 (QPEPQPLALPPAE) has biased composition (pro residues).

The protein belongs to the RNA polymerase beta' chain family. In terms of assembly, the RNAP catalytic core consists of 2 alpha, 1 beta, 1 beta' and 1 omega subunit. When a sigma factor is associated with the core the holoenzyme is formed, which can initiate transcription. Mg(2+) serves as cofactor. It depends on Zn(2+) as a cofactor.

It carries out the reaction RNA(n) + a ribonucleoside 5'-triphosphate = RNA(n+1) + diphosphate. Its function is as follows. DNA-dependent RNA polymerase catalyzes the transcription of DNA into RNA using the four ribonucleoside triphosphates as substrates. In Bradyrhizobium sp. (strain BTAi1 / ATCC BAA-1182), this protein is DNA-directed RNA polymerase subunit beta'.